A 125-amino-acid polypeptide reads, in one-letter code: Small ribosomal subunit protein uS13 (125 aa).

This sequence belongs to the universal ribosomal protein uS13 family. In terms of assembly, part of the 30S ribosomal subunit. Forms a loose heterodimer with protein S19. Forms two bridges to the 50S subunit in the 70S ribosome.

In terms of biological role, located at the top of the head of the 30S subunit, it contacts several helices of the 16S rRNA. In the 70S ribosome it contacts the 23S rRNA (bridge B1a) and protein L5 of the 50S subunit (bridge B1b), connecting the 2 subunits; these bridges are implicated in subunit movement. Contacts the tRNAs in the A and P-sites. The protein is Small ribosomal subunit protein uS13 of Rickettsia bellii (strain OSU 85-389).